We begin with the raw amino-acid sequence, 283 residues long: Pantothenate synthetase (283 aa).

31 to 38 provides a ligand contact to ATP; it reads MGALHDGH. The active-site Proton donor is the His38. Gln62 provides a ligand contact to (R)-pantoate. Position 62 (Gln62) interacts with beta-alanine. 148-151 provides a ligand contact to ATP; it reads GKKD. A (R)-pantoate-binding site is contributed by Gln154. ATP is bound by residues Val177 and 185-188; that span reads KSSR.

The protein belongs to the pantothenate synthetase family. In terms of assembly, homodimer.

Its subcellular location is the cytoplasm. It catalyses the reaction (R)-pantoate + beta-alanine + ATP = (R)-pantothenate + AMP + diphosphate + H(+). It participates in cofactor biosynthesis; (R)-pantothenate biosynthesis; (R)-pantothenate from (R)-pantoate and beta-alanine: step 1/1. In terms of biological role, catalyzes the condensation of pantoate with beta-alanine in an ATP-dependent reaction via a pantoyl-adenylate intermediate. This is Pantothenate synthetase from Staphylococcus aureus (strain bovine RF122 / ET3-1).